The following is a 428-amino-acid chain: PGL/p-HBAD biosynthesis glycosyltransferase MRA_2985 (428 aa).

The tract at residues 1-23 is disordered; the sequence is MEETSVAGDPGPDAGTSTAPNAA.

The protein belongs to the UDP-glycosyltransferase family.

In terms of biological role, involved in glycosylation steps downstream of mono-O-methyl-glycosyl-p-hydroxybenzoic acid derivative (p-HBAD I) and 2-O-methyl-rhamnosyl-phenolphthiocerol dimycocerosate (mycoside B) during the p-hydroxybenzoic acid derivatives (p-HBAD) and glycosylated phenolphthiocerol dimycocerosates (PGL) biosynthesis. The sequence is that of PGL/p-HBAD biosynthesis glycosyltransferase MRA_2985 from Mycobacterium tuberculosis (strain ATCC 25177 / H37Ra).